A 715-amino-acid chain; its full sequence is Palmitoyltransferase ZDHHC5 (715 aa).

At 1-13 (MPAESGKRFKPSK) the chain is on the cytoplasmic side. The helical transmembrane segment at 14–34 (YVPVSAAAIFLVGATTLFFAF) threads the bilayer. The Extracellular segment spans residues 35 to 38 (TCPG). Residues 39–59 (LSLCVSPAVPIYNAIVFLFVL) form a helical membrane-spanning segment. Residues 60-148 (ANFSMATFMD…NCIGRRNYRY (89 aa)) lie on the Cytoplasmic side of the membrane. A Phosphotyrosine modification is found at Tyr91. The DHHC domain maps to 104–154 (KWCATCRFYRPPRCSHCSVCDNCVEEFDHHCPWVNNCIGRRNYRYFFLFLL). Cys134 acts as the S-palmitoyl cysteine intermediate in catalysis. A helical transmembrane segment spans residues 149–169 (FFLFLLSLTAHIMGVFGFGLL). Residues 170–191 (YVLYHMEELSGVRTAVTMAVMC) are Extracellular-facing. A helical membrane pass occupies residues 192-212 (VAGLFFIPVAGLTGFHVVLVA). Residues 213–715 (RGRTTNEQVT…VGGTTYEISV (503 aa)) are Cytoplasmic-facing. 3 positions are modified to phosphoserine: Ser247, Ser296, and Ser299. Residues 289-648 (GELRRSKSKG…SQKAPAGVSE (360 aa)) are disordered. Thr303 is modified (phosphothreonine). Ser345 is modified (phosphoserine). Residues Thr348 and Thr350 each carry the phosphothreonine modification. Positions 359–373 (SSSSTSAAMPHSSSA) are enriched in low complexity. Ser380, Ser398, Ser406, and Ser409 each carry phosphoserine. At Thr411 the chain carries Phosphothreonine. Ser415, Ser425, Ser429, and Ser432 each carry phosphoserine. Residues 422–432 (SSGSRSSSLKS) are compositionally biased toward low complexity. Thr436 bears the Phosphothreonine mark. The span at 442-478 (QLQSIRSEGTTSTSYKSLANQTRNGSLSYDSLLTPSD) shows a compositional bias: polar residues. Ser529 and Ser554 each carry phosphoserine. Arg617 carries the post-translational modification Omega-N-methylarginine. The residue at position 621 (Ser621) is a Phosphoserine. At Thr659 the chain carries Phosphothreonine. Residues 666-715 (LKTAYSKSNGQPKSIGSASPGPGQQPLSSPTRGGVKKVSGVGGTTYEISV) are disordered. Over residues 668–679 (TAYSKSNGQPKS) the composition is skewed to polar residues. Over residues 681 to 695 (GSASPGPGQQPLSSP) the composition is skewed to low complexity. Phosphoserine occurs at positions 684 and 694. Arg697 carries the post-translational modification Omega-N-methylarginine.

This sequence belongs to the DHHC palmitoyltransferase family. ERF2/ZDHHC9 subfamily. Phosphorylation regulates association with endocytic proteins and its subcellular localization. Phosphorylation by LYN during fatty acid uptake leads to inactivation of the activity. In terms of processing, autopalmitoylated. Palmitoylation of the C-terminal tail regulates stimulation-dependent plasma membrane motility.

Its subcellular location is the cell membrane. The enzyme catalyses L-cysteinyl-[protein] + hexadecanoyl-CoA = S-hexadecanoyl-L-cysteinyl-[protein] + CoA. Functionally, palmitoyltransferase that catalyzes the addition of palmitate onto various protein substrates such as CTNND2, CD36, GSDMD, NLRP3, NOD1, NOD2, STAT3 and S1PR1 thus plays a role in various biological processes including cell adhesion, inflammation, fatty acid uptake, bacterial sensing or cardiac functions. Plays an important role in the regulation of synapse efficacy by mediating palmitoylation of delta-catenin/CTNND2, thereby increasing synaptic delivery and surface stabilization of alpha-amino-3-hydroxy-5-methyl-4-isoxazole propionic acid receptors (AMPARs). Under basal conditions, remains at the synaptic membrane through FYN-mediated phosphorylation that prevents association with endocytic proteins. Neuronal activity enhances the internalization and trafficking of DHHC5 from spines to dendritic shafts where it palmitoylates delta-catenin/CTNND2. Regulates cell adhesion at the plasma membrane by palmitoylating GOLGA7B and DSG2. Plays a role in innate immune response by mediating the palmitoylation of NOD1 and NOD2 and their proper recruitment to the bacterial entry site and phagosomes. Also participates in fatty acid uptake by palmitoylating CD36 and thereby targeting it to the plasma membrane. Upon binding of fatty acids to CD36, gets phosphorylated by LYN leading to inactivation and subsequent CD36 caveolar endocytosis. Controls oligodendrocyte development by catalyzing STAT3 palmitoylation. Acts as a regulator of inflammatory response by mediating palmitoylation of NLRP3 and GSDMD. Palmitoylates NLRP3 to promote inflammasome assembly and activation. Activates pyroptosis by catalyzing palmitoylation of gasdermin-D (GSDMD), thereby promoting membrane translocation and pore formation of GSDMD. This is Palmitoyltransferase ZDHHC5 (ZDHHC5) from Canis lupus familiaris (Dog).